Reading from the N-terminus, the 116-residue chain is NADH-ubiquinone oxidoreductase chain 3 (116 aa).

A run of 3 helical transmembrane segments spans residues leucine 3–phenylalanine 23, phenylalanine 56–leucine 76, and leucine 87–tryptophan 107.

It belongs to the complex I subunit 3 family.

Its subcellular location is the mitochondrion membrane. The enzyme catalyses a ubiquinone + NADH + 5 H(+)(in) = a ubiquinol + NAD(+) + 4 H(+)(out). Core subunit of the mitochondrial membrane respiratory chain NADH dehydrogenase (Complex I) that is believed to belong to the minimal assembly required for catalysis. Complex I functions in the transfer of electrons from NADH to the respiratory chain. The immediate electron acceptor for the enzyme is believed to be ubiquinone. This is NADH-ubiquinone oxidoreductase chain 3 (MT-ND3) from Gadus morhua (Atlantic cod).